Consider the following 228-residue polypeptide: L-ribulose-5-phosphate 4-epimerase UlaF (228 aa).

Residues 26–27 (GN), 43–44 (SG), and 72–73 (SS) each bind substrate. Positions 74, 93, and 95 each coordinate Zn(2+). Asp118 acts as the Proton donor/acceptor in catalysis. Position 167 (His167) interacts with Zn(2+). Tyr225 acts as the Proton donor/acceptor in catalysis.

It belongs to the aldolase class II family. AraD/FucA subfamily. The cofactor is Zn(2+).

It carries out the reaction L-ribulose 5-phosphate = D-xylulose 5-phosphate. Its pathway is cofactor degradation; L-ascorbate degradation; D-xylulose 5-phosphate from L-ascorbate: step 4/4. Its function is as follows. Catalyzes the isomerization of L-ribulose 5-phosphate to D-xylulose 5-phosphate. Is involved in the anaerobic L-ascorbate utilization. The chain is L-ribulose-5-phosphate 4-epimerase UlaF from Escherichia coli (strain ATCC 8739 / DSM 1576 / NBRC 3972 / NCIMB 8545 / WDCM 00012 / Crooks).